Here is a 303-residue protein sequence, read N- to C-terminus: Probable 5-dehydro-4-deoxyglucarate dehydratase (303 aa).

It belongs to the DapA family.

The catalysed reaction is 5-dehydro-4-deoxy-D-glucarate + H(+) = 2,5-dioxopentanoate + CO2 + H2O. Its pathway is carbohydrate acid metabolism; D-glucarate degradation; 2,5-dioxopentanoate from D-glucarate: step 2/2. The polypeptide is Probable 5-dehydro-4-deoxyglucarate dehydratase (Variovorax paradoxus (strain S110)).